We begin with the raw amino-acid sequence, 565 residues long: NAD-dependent malic enzyme (565 aa).

Tyr-104 (proton donor) is an active-site residue. Arg-157 contributes to the NAD(+) binding site. Lys-175 serves as the catalytic Proton acceptor. Positions 246, 247, and 270 each coordinate a divalent metal cation. NAD(+) contacts are provided by Asp-270 and Asn-418.

The protein belongs to the malic enzymes family. Homotetramer. Requires Mg(2+) as cofactor. Mn(2+) serves as cofactor.

It carries out the reaction (S)-malate + NAD(+) = pyruvate + CO2 + NADH. It catalyses the reaction oxaloacetate + H(+) = pyruvate + CO2. The protein is NAD-dependent malic enzyme of Photorhabdus laumondii subsp. laumondii (strain DSM 15139 / CIP 105565 / TT01) (Photorhabdus luminescens subsp. laumondii).